Reading from the N-terminus, the 91-residue chain is Large ribosomal subunit protein bL27 (91 aa).

A compositionally biased stretch (gly residues) spans 1 to 10; the sequence is MAQKKGGGST. The interval 1–20 is disordered; that stretch reads MAQKKGGGSTRNGRDSQPKM.

The protein belongs to the bacterial ribosomal protein bL27 family.

This Verminephrobacter eiseniae (strain EF01-2) protein is Large ribosomal subunit protein bL27.